The primary structure comprises 210 residues: N-(5'-phosphoribosyl)anthranilate isomerase (210 aa).

The protein belongs to the TrpF family.

The catalysed reaction is N-(5-phospho-beta-D-ribosyl)anthranilate = 1-(2-carboxyphenylamino)-1-deoxy-D-ribulose 5-phosphate. The protein operates within amino-acid biosynthesis; L-tryptophan biosynthesis; L-tryptophan from chorismate: step 3/5. The chain is N-(5'-phosphoribosyl)anthranilate isomerase (TRP1) from Eremothecium gossypii (strain ATCC 10895 / CBS 109.51 / FGSC 9923 / NRRL Y-1056) (Yeast).